The sequence spans 282 residues: MYFKRYLQLAKPGIIFGNLITLTGGFLLATHREIGFEYLPLFVYVMIGVALMIAAGCVFNNIYDKDIDSSMTRTQNRPLVTGDISVIQATIYGTILLILSCLVLYYLVILLTLWIIIIGFIVYVGIYTVSKRLTIHATVLGGISGAIPPVAGYTAVVNILDYNALALFLILFFWQIPHSYAIAMLYIDDYKKVKLPMLPIVKGIAYTKKIMLFYLALFVVSCALPAVLGSADLFSFIVCMLVALFWMYKSIQSYRTDTDRVFAKTVFKFSIIVITVICLTMG.

Transmembrane regions (helical) follow at residues 9 to 29, 39 to 59, 79 to 99, 102 to 122, 139 to 159, 165 to 185, 210 to 230, 231 to 251, and 261 to 281; these read LAKPGIIFGNLITLTGGFLLA, LPLFVYVMIGVALMIAAGCVF, LVTGDISVIQATIYGTILLIL, LVLYYLVILLTLWIIIIGFIV, VLGGISGAIPPVAGYTAVVNI, LALFLILFFWQIPHSYAIAML, IMLFYLALFVVSCALPAVLGS, ADLFSFIVCMLVALFWMYKSI, and VFAKTVFKFSIIVITVICLTM.

The protein belongs to the UbiA prenyltransferase family. Protoheme IX farnesyltransferase subfamily.

Its subcellular location is the cell inner membrane. It carries out the reaction heme b + (2E,6E)-farnesyl diphosphate + H2O = Fe(II)-heme o + diphosphate. The protein operates within porphyrin-containing compound metabolism; heme O biosynthesis; heme O from protoheme: step 1/1. Its function is as follows. Converts heme B (protoheme IX) to heme O by substitution of the vinyl group on carbon 2 of heme B porphyrin ring with a hydroxyethyl farnesyl side group. The polypeptide is Protoheme IX farnesyltransferase (Francisella tularensis subsp. tularensis (strain FSC 198)).